We begin with the raw amino-acid sequence, 212 residues long: Thymidylate kinase (212 aa).

ATP is bound by residues 16–21 (RAGKTT), Arg97, Arg182, and Lys192.

Belongs to the thymidylate kinase family. Mg(2+) is required as a cofactor.

It carries out the reaction dTMP + ATP = dTDP + ADP. Its pathway is pyrimidine metabolism; dTTP biosynthesis. In terms of biological role, catalyzes the phosphorylation of thymidine monophosphate (dTMP) to thymidine diphosphate (dTDP), the immediate precursor for the DNA building block dTTP, with ATP as the preferred phosphoryl donor in the presence of Mg(2+). The sequence is that of Thymidylate kinase (dtymk) from Danio rerio (Zebrafish).